The chain runs to 441 residues: tRNA (guanine(37)-N(1))-methyltransferase (441 aa).

A mitochondrion-targeting transit peptide spans 1–9 (MFAPPAARA). S-adenosyl-L-methionine-binding positions include R221, 248 to 249 (DL), 276 to 277 (DG), and N331.

The protein belongs to the class I-like SAM-binding methyltransferase superfamily. TRM5/TYW2 family. Monomer.

It is found in the mitochondrion matrix. The protein localises to the nucleus. It localises to the cytoplasm. It catalyses the reaction guanosine(37) in tRNA + S-adenosyl-L-methionine = N(1)-methylguanosine(37) in tRNA + S-adenosyl-L-homocysteine + H(+). Specifically methylates the N1 position of guanosine-37 in various cytoplasmic and mitochondrial tRNAs. Methylation is not dependent on the nature of the nucleoside 5' of the target nucleoside. This is the first step in the biosynthesis of wybutosine (yW), a modified base adjacent to the anticodon of tRNAs and required for accurate decoding. This Phaeosphaeria nodorum (strain SN15 / ATCC MYA-4574 / FGSC 10173) (Glume blotch fungus) protein is tRNA (guanine(37)-N(1))-methyltransferase.